Here is a 451-residue protein sequence, read N- to C-terminus: Tubulin alpha-2 chain (451 aa).

The GTP site is built by glutamine 12, aspartate 73, serine 142, glycine 146, threonine 147, threonine 181, asparagine 208, and asparagine 230. Aspartate 73 lines the Mg(2+) pocket. Glutamate 256 is an active-site residue.

It belongs to the tubulin family. Dimer of alpha and beta chains. A typical microtubule is a hollow water-filled tube with an outer diameter of 25 nm and an inner diameter of 15 nM. Alpha-beta heterodimers associate head-to-tail to form protofilaments running lengthwise along the microtubule wall with the beta-tubulin subunit facing the microtubule plus end conferring a structural polarity. Microtubules usually have 13 protofilaments but different protofilament numbers can be found in some organisms and specialized cells. It depends on Mg(2+) as a cofactor.

The protein resides in the cytoplasm. Its subcellular location is the cytoskeleton. The enzyme catalyses GTP + H2O = GDP + phosphate + H(+). In terms of biological role, tubulin is the major constituent of microtubules, a cylinder consisting of laterally associated linear protofilaments composed of alpha- and beta-tubulin heterodimers. Microtubules grow by the addition of GTP-tubulin dimers to the microtubule end, where a stabilizing cap forms. Below the cap, tubulin dimers are in GDP-bound state, owing to GTPase activity of alpha-tubulin. The sequence is that of Tubulin alpha-2 chain (tubB) from Emericella nidulans (strain FGSC A4 / ATCC 38163 / CBS 112.46 / NRRL 194 / M139) (Aspergillus nidulans).